The sequence spans 45 residues: Mu-conotoxin-like Cal 12.1.2d (45 aa).

4 cysteine pairs are disulfide-bonded: cysteine 3–cysteine 16, cysteine 11–cysteine 28, cysteine 18–cysteine 33, and cysteine 27–cysteine 39. Tryptophan 17 bears the 6'-bromotryptophan mark. Proline 23 carries the post-translational modification 4-hydroxyproline. 6'-bromotryptophan is present on residues tryptophan 37 and tryptophan 38. 4-hydroxyproline is present on proline 40.

In terms of tissue distribution, expressed by the venom duct.

Its subcellular location is the secreted. Functionally, mu-conotoxins block voltage-gated sodium channels. This toxin reversibly blocks voltage-gated sodium channel in cephalopods, with no alteration in the voltage dependence of sodium conductance or on the kinetics of inactivation. The polypeptide is Mu-conotoxin-like Cal 12.1.2d (Californiconus californicus (California cone)).